We begin with the raw amino-acid sequence, 31 residues long: Photosystem II reaction center protein T (31 aa).

The helical transmembrane segment at 3 to 23 (SFAYILILAFSIGTLFFAIAL) threads the bilayer.

This sequence belongs to the PsbT family. In terms of assembly, PSII is composed of 1 copy each of membrane proteins PsbA, PsbB, PsbC, PsbD, PsbE, PsbF, PsbH, PsbI, PsbJ, PsbK, PsbL, PsbM, PsbT, PsbX, PsbY, PsbZ, Psb30/Ycf12, peripheral proteins PsbO, CyanoQ (PsbQ), PsbU, PsbV and a large number of cofactors. It forms dimeric complexes.

Its subcellular location is the cellular thylakoid membrane. Found at the monomer-monomer interface of the photosystem II (PS II) dimer, plays a role in assembly and dimerization of PSII. PSII is a light-driven water plastoquinone oxidoreductase, using light energy to abstract electrons from H(2)O, generating a proton gradient subsequently used for ATP formation. This chain is Photosystem II reaction center protein T, found in Synechococcus sp. (strain RCC307).